The chain runs to 498 residues: ATP synthase subunit beta, chloroplastic (498 aa).

172–179 (GGAGVGKT) serves as a coordination point for ATP.

This sequence belongs to the ATPase alpha/beta chains family. F-type ATPases have 2 components, CF(1) - the catalytic core - and CF(0) - the membrane proton channel. CF(1) has five subunits: alpha(3), beta(3), gamma(1), delta(1), epsilon(1). CF(0) has four main subunits: a(1), b(1), b'(1) and c(9-12).

It is found in the plastid. Its subcellular location is the chloroplast thylakoid membrane. The catalysed reaction is ATP + H2O + 4 H(+)(in) = ADP + phosphate + 5 H(+)(out). Its function is as follows. Produces ATP from ADP in the presence of a proton gradient across the membrane. The catalytic sites are hosted primarily by the beta subunits. The polypeptide is ATP synthase subunit beta, chloroplastic (Montinia caryophyllacea (Wild clove bush)).